A 304-amino-acid polypeptide reads, in one-letter code: Mitochondrial glycine transporter (304 aa).

Solcar repeat units lie at residues 3 to 82, 106 to 186, and 209 to 293; these read GKSK…VREA, ENLI…LKVA, and SSAM…LVKR. A run of 6 helical transmembrane segments spans residues 9-34, 57-83, 108-133, 161-184, 213-239, and 268-286; these read IYAGFTSGLVSAVVLQPFDLLKTRVQ, GTLPSALRMSVGSAMYFTCLNTVREAV, LISGGLVRGTVGLLVMPITVIKVRYE, GWAATFARDAPYAGLYMLFYEQLK, INSVAAATSAGIATTCTNPFDTVKTRM, and GLALRICRKACQAGISWCI.

This sequence belongs to the mitochondrial carrier (TC 2.A.29) family. SLC25A38 subfamily.

It localises to the mitochondrion inner membrane. It carries out the reaction glycine(in) = glycine(out). In terms of biological role, mitochondrial glycine transporter that imports glycine into the mitochondrial matrix. Plays an important role in providing glycine for the first enzymatic step in heme biosynthesis, the condensation of glycine with succinyl-CoA to produce 5-aminolevulinate (ALA) in the mitochondrial matrix. The polypeptide is Mitochondrial glycine transporter (Yarrowia lipolytica (strain CLIB 122 / E 150) (Yeast)).